The primary structure comprises 230 residues: Demethylmenaquinone methyltransferase (230 aa).

S-adenosyl-L-methionine contacts are provided by residues T62, D80, 100–101 (DG), and S117.

This sequence belongs to the class I-like SAM-binding methyltransferase superfamily. MenG/UbiE family.

The enzyme catalyses a 2-demethylmenaquinol + S-adenosyl-L-methionine = a menaquinol + S-adenosyl-L-homocysteine + H(+). The protein operates within quinol/quinone metabolism; menaquinone biosynthesis; menaquinol from 1,4-dihydroxy-2-naphthoate: step 2/2. In terms of biological role, methyltransferase required for the conversion of demethylmenaquinol (DMKH2) to menaquinol (MKH2). This chain is Demethylmenaquinone methyltransferase, found in Corynebacterium glutamicum (strain ATCC 13032 / DSM 20300 / JCM 1318 / BCRC 11384 / CCUG 27702 / LMG 3730 / NBRC 12168 / NCIMB 10025 / NRRL B-2784 / 534).